The primary structure comprises 367 residues: 2-aminoethylphosphonate--pyruvate transaminase (367 aa).

Lys194 carries the post-translational modification N6-(pyridoxal phosphate)lysine.

This sequence belongs to the class-V pyridoxal-phosphate-dependent aminotransferase family. PhnW subfamily. In terms of assembly, homodimer. The cofactor is pyridoxal 5'-phosphate.

It carries out the reaction (2-aminoethyl)phosphonate + pyruvate = phosphonoacetaldehyde + L-alanine. Functionally, involved in phosphonate degradation. This is 2-aminoethylphosphonate--pyruvate transaminase from Salmonella agona (strain SL483).